Consider the following 130-residue polypeptide: Succinate dehydrogenase cytochrome b556 subunit (130 aa).

The Cytoplasmic segment spans residues 1–26; it reads MADVNRGNRPLSPHLQVYRLPLAAIT. A helical transmembrane segment spans residues 27–52; that stretch reads SIMTRITGHALVAGIVLITWWLVAAV. Residues 53-68 are Periplasmic-facing; sequence TSPGAFACADWVVRSW. Residues 69 to 89 traverse the membrane as a helical segment; it reads LGFIILTGSMWALWYHLLAGL. Heme is bound at residue histidine 84. At 90-109 the chain is on the cytoplasmic side; that stretch reads RHLFYDAGYGLEIEQAHKSS. A helical transmembrane segment spans residues 110–130; the sequence is QALIAGSVVLAVLTLIVFFVF.

The protein belongs to the cytochrome b560 family. Part of an enzyme complex containing four subunits: a flavoprotein, an iron-sulfur protein, plus two membrane-anchoring proteins, SdhC and SdhD. The complex can form homotrimers. The cofactor is heme.

The protein localises to the cell inner membrane. Its pathway is carbohydrate metabolism; tricarboxylic acid cycle. In terms of biological role, membrane-anchoring subunit of succinate dehydrogenase (SDH). The sequence is that of Succinate dehydrogenase cytochrome b556 subunit (sdhC) from Paracoccus denitrificans.